A 150-amino-acid polypeptide reads, in one-letter code: UPF0178 protein PC1_0756 (150 aa).

This sequence belongs to the UPF0178 family.

The chain is UPF0178 protein PC1_0756 from Pectobacterium carotovorum subsp. carotovorum (strain PC1).